The primary structure comprises 677 residues: MAKFRVRVSTGEACGAGTWDKVSVSIVGTHGESPLVPLDHLGKEFSAGAEEDFEVTLPQDVGTVLMLRIHKAPPEAPLPLLSFPPDAWYCRWFELEWLPGAALRFPCYQWLEGAGELVLREGAAKVSWQDHHRTLQDQRQKELESRKDMYSWKTYIEGWPHCLDHETVKDLDLNIKYSAMKNAKFFFKAQSAFTELKFKGLLDRTGLWRSLREMKRMFNFHNTPAAEYVFAHWQEDAFFASQFLNGLNPVLIRRCRRLPENFPVTDEMVAPVLGPGTSLQAELEKGSLFLVDHGILSGVQTNVINGKPQFSAAPMTLLYQSPGSGPLLPIAIQLKQTPGPDNPIFLPSDDKWDWLLAKTWVRNAEFSIHEALTHLLHAHLIPEVFALATLRQLPHCHPLFKLLIPHTRYTLHINTLARELLIAPGKVVDKSTGLGIGGFSDLIKRNMEQLSYSVLCLPEDIRARDVGDLPGYYYRDDGMQIWSAIRSFVSEIVDIYYPSDASVRDDQELQAWVGEIFSEGFLSQESSGMPSLLDTQEALVQYVTMVIFTCSAKHAAVSASQFDSCVWMPNLPPSMQLPPPTSKGQASPEGFIATLPAVNATCDVIIALWLLSKEPGDRRPLGHYPDEHFTEEVPRRSIAAFQRKLIQISSGIRKRNQSLALPYTYLDPPLIENSVSI.

The PLAT domain occupies 2-125 (AKFRVRVSTG…ELVLREGAAK (124 aa)). Positions 15, 17, 39, 40, 42, 44, 86, and 87 each coordinate Ca(2+). Positions 126 to 677 (VSWQDHHRTL…PPLIENSVSI (552 aa)) constitute a Lipoxygenase domain. Fe cation-binding residues include histidine 374, histidine 379, histidine 554, and isoleucine 677.

The protein belongs to the lipoxygenase family. Fe cation serves as cofactor.

It localises to the cytoplasm. It is found in the cytosol. The protein localises to the cell membrane. The protein resides in the cytoskeleton. Its subcellular location is the membrane. It localises to the cell junction. It is found in the adherens junction. The protein localises to the focal adhesion. The protein resides in the nucleus. The catalysed reaction is (5Z,8Z,11Z,14Z)-eicosatetraenoate + O2 = (15S)-hydroperoxy-(5Z,8Z,11Z,13E)-eicosatetraenoate. The enzyme catalyses (9Z,12Z)-octadecadienoate + O2 = 13-hydroperoxy-(9Z,11E)-octadecadienoate. It carries out the reaction (5S)-hydroxy-(6E,8Z,11Z,14Z)-eicosatetraenoate + O2 = (5S)-hydroxy-(15S)-hydroperoxy-(6E,8Z,11Z,13E)-eicosatetraenoate. It catalyses the reaction (5Z,8Z,11Z,14Z)-eicosatetraenoate + O2 = 5-hydroperoxy-(6E,8Z,11Z,14Z)-eicosatetraenoate. The catalysed reaction is (5S,6R)-dihydroxy-(7E,9E,11Z,14Z)-eicosatetraenoate + O2 = (5S,6R)-dihydroxy-(15S)-hydroperoxy-(7E,9E,11Z,13E)-eicosatetraenoate. The enzyme catalyses (5S)-hydroperoxy-(6E,8Z,11Z,14Z)-eicosatetraenoate + O2 = (5S,15S)-dihydroperoxy-(6E,8Z,11Z,13E)-eicosatetraenoate. It carries out the reaction 2-(5Z,8Z,11Z,14Z-eicosatetraenoyl)-glycerol + O2 = 2-[15(S)-hydroperoxy-(5Z,8Z,11Z,13E)-eicosatetraenoyl]-glycerol. It catalyses the reaction (8S)-hydroperoxy-(5Z,9E,11Z,14Z)-eicosatetraenoate + O2 = (8S,15S)-dihydroperoxy-(5Z,9E,11Z,13E)-eicosatetraenoate. The catalysed reaction is N-(5Z,8Z,11Z,14Z)-eicosatetraenoyl-L-alanine + O2 = N-(15S)-hydroperoxy-(5Z,8Z,11Z,13E)-eicosatetraenoyl-alanine. The enzyme catalyses N-(5Z,8Z,11Z,14Z)-eicosatetraenoyl-gamma-aminobutanoate + O2 = N-(15S)-hydroperoxy-(5Z,8Z,11Z,13E)-eicosatetraenoyl-gamma-aminobutanoate. It carries out the reaction N-(5Z,8Z,11Z,14Z)-eicosatetraenoyl-glycine + O2 = N-(15S)-hydroperoxy-(5Z,8Z,11Z,13E)-eicosatetraenoyl-glycine. It catalyses the reaction N-(5Z,8Z,11Z,14Z)-eicosatetraenoyl-taurine + O2 = N-(15S)-hydroperoxy-(5Z,8Z,11Z,13E)-eicosatetraenoyl-taurine. The catalysed reaction is 2-(5Z,8Z,11Z,14Z-eicosatetraenoyl)-glycerol + O2 = 2-[12-hydroperoxy-(5Z,8Z,10E,14Z)-eicosatetraenoyl]-glycerol. The enzyme catalyses 1-octadecanoyl-2-(5Z,8Z,11Z,14Z-eicosatetraenoyl)-sn-glycero-3-phosphocholine + O2 = 1-octadecanoyl-2-(15-hydroperoxy-5Z,8Z,11Z,13E-eicosatetraenoyl)-sn-glycero-3-phosphocholine. It carries out the reaction a 1-acyl-2-(5Z,8Z,11Z,14Z-eicosatetraenoyl)-sn-glycero-3-phospho-(1D-myo-inositol) + O2 = a 1-acyl-2-(15-hydroperoxy-5Z,8Z,11Z,13E-eicosatetraenoyl)-sn-glycero-3-phospho-(1D-myo-inositol). It catalyses the reaction a 1-acyl-2-(8Z,11Z,14Z-eicosatrienoyl)-sn-glycero-3-phospho-(1D-myo-inositol) + O2 = a 1-acyl-2-(15-hydroperoxy-8Z,11Z,13E-eicosatrienoyl)-sn-glycero-3-phospho-(1D-myo-inositol). The catalysed reaction is 1-octadecanoyl-2-(5Z,8Z,11Z,14Z)-eicosatetraenoyl-sn-glycero-3-phosphoethanolamine + O2 = 1-octadecanoyl-2-(15-hydroperoxy-5Z,8Z,11Z,13E-eicosatetraenoyl)-sn-glycero-3-phosphoethanolamine. The enzyme catalyses 1-octadecanoyl-2-(5Z,8Z,11Z,14Z-eicosatetraenoyl)-sn-glycero-3-phospho-(1D-myo-inositol) + O2 = 1-octadecanoyl-2-(15-hydroperoxy-5Z,8Z,11Z,13E-eicosatetraenoyl)-sn-glycero-3-phospho-(1D-myo-inositol). It carries out the reaction (8Z,11Z,14Z)-eicosatrienoate + O2 = 15-hydroperoxy-(8Z,11Z,13E)-eicosatrienoate. It catalyses the reaction (7S)-hydroperoxy-(4Z,8E,10Z,13Z,16Z,19Z)-docosahexaenoate + O2 = (7S,17S)-dihydroperoxy-(4Z,8E,10Z,13Z,15E,19Z)-docosahexaenoate. The protein operates within lipid metabolism; hydroperoxy eicosatetraenoic acid biosynthesis. Functionally, non-heme iron-containing dioxygenase that catalyzes the stereo-specific peroxidation of free and esterified polyunsaturated fatty acids (PUFAs) generating a spectrum of bioactive lipid mediators. Inserts a peroxyl group at C15 of arachidonate ((5Z,8Z,11Z,14Z)-eicosatetraenoate) producing (15S)-hydroperoxyeicosatetraenoate/(15S)-HPETE. Also peroxidizes linoleate ((9Z,12Z)-octadecadienoate) to 13-hydroperoxyoctadecadienoate/13-HPODE. Oxygenates arachidonyl derivatives such as 2-arachidonoylglycerol (2-AG) leading to the production and extracellular release of 15-hydroxyeicosatetraenoyl glycerol (15-HETE-G) that acts as a peroxisome proliferator-activated receptor alpha agonist. Has the ability to efficiently class-switch ALOX5 pro-inflammatory mediators into anti-inflammatory intermediates. Participates in the sequential oxidations of DHA ((4Z,7Z,10Z,13Z,16Z,19Z)-docosahexaenoate) to generate specialized pro-resolving mediators (SPMs) resolvin D5 ((7S,17S)-diHPDHA), which can actively down-regulate the immune response and have anti-aggregation properties with platelets. In addition to free PUFAs hydrolyzed from phospholipids, it directly oxidizes PUFAs esterified to membrane-bound phospholipids. Has no detectable 8S-lipoxygenase activity on arachidonate but reacts with (8S)-HPETE to produce (8S,15S)-diHPETE. May regulate progression through the cell cycle and cell proliferation. May also regulate cytokine secretion by macrophages and therefore play a role in the immune response. May also regulate macrophage differentiation into proatherogenic foam cells. The sequence is that of Polyunsaturated fatty acid lipoxygenase ALOX15B from Rattus norvegicus (Rat).